The chain runs to 213 residues: tRNA (guanine-N(7)-)-methyltransferase (213 aa).

S-adenosyl-L-methionine contacts are provided by D44, E69, N96, and D119. The active site involves D119. Positions 123 and 155 each coordinate substrate.

Belongs to the class I-like SAM-binding methyltransferase superfamily. TrmB family.

The enzyme catalyses guanosine(46) in tRNA + S-adenosyl-L-methionine = N(7)-methylguanosine(46) in tRNA + S-adenosyl-L-homocysteine. It participates in tRNA modification; N(7)-methylguanine-tRNA biosynthesis. Its function is as follows. Catalyzes the formation of N(7)-methylguanine at position 46 (m7G46) in tRNA. The chain is tRNA (guanine-N(7)-)-methyltransferase from Thermosynechococcus vestitus (strain NIES-2133 / IAM M-273 / BP-1).